The primary structure comprises 199 residues: ParB-like protein Saci_1498 (199 aa).

It belongs to the ParB family.

Probably part of a 4-gene DNA damage response locus in which the upstream ups system, in combination with this downstream locus, functions in homologous recombination to rescue Sulfolobales from DNA-damaging threats. This protein might function in the DNA transfer machinery. The sequence is that of ParB-like protein Saci_1498 from Sulfolobus acidocaldarius (strain ATCC 33909 / DSM 639 / JCM 8929 / NBRC 15157 / NCIMB 11770).